The primary structure comprises 152 residues: Transcriptional regulator MraZ (152 aa).

SpoVT-AbrB domains are found at residues A5–E52 and A81–T124.

The protein belongs to the MraZ family. In terms of assembly, forms oligomers.

The protein localises to the cytoplasm. Its subcellular location is the nucleoid. Negatively regulates its own expression and that of the subsequent genes in the proximal part of the division and cell wall (dcw) gene cluster. Acts by binding directly to DNA. May also regulate the expression of genes outside the dcw cluster. The polypeptide is Transcriptional regulator MraZ (Salmonella typhi).